A 301-amino-acid polypeptide reads, in one-letter code: Rhodopsin (301 aa).

Over 1 to 18 (LHMIHLHWYQYPPMNPMM) the chain is Extracellular. A helical transmembrane segment spans residues 19-43 (YPLLLVFMLITGILCLAGNFVTIWV). Topologically, residues 44-55 (FMNTKSLRTPAN) are cytoplasmic. A helical membrane pass occupies residues 56–78 (LLVVNLAMSDFLMMFTMFPPMMI). The Extracellular portion of the chain corresponds to 79–92 (TCYYHTWTLGATFC). Cys-92 and Cys-169 are oxidised to a cystine. Residues 93 to 115 (EVYAFLGNLCGCASIWTMVFITF) traverse the membrane as a helical segment. The 'Ionic lock' involved in activated form stabilization motif lies at 116–118 (DRY). Residues 116-134 (DRYNVIVKGVAGEPLSTKK) are Cytoplasmic-facing. A helical membrane pass occupies residues 135–155 (ASLWILTVWVLSFTWCVAPFF). The Extracellular portion of the chain corresponds to 156 to 182 (GWNRYVPEGNLTGCGTDYLSEDILSRS). An N-linked (GlcNAc...) asparagine glycan is attached at Asn-165. Residues 183–204 (YLYIYSTWVYFLPLAITIYCYV) traverse the membrane as a helical segment. At 205–245 (FIIKAVAAHEKGMRDQAKKMGIKSLRNEEAQKTSAECRLAK) the chain is on the cytoplasmic side. The helical transmembrane segment at 246–267 (IAMTTVALWFIAWTPYLLINWV) threads the bilayer. Topologically, residues 268 to 278 (GMFARSYLSPV) are extracellular. Residues 279 to 300 (YTIWGYVFAKANAVYNPIVYAI) form a helical membrane-spanning segment. Residue Lys-288 is modified to N6-(retinylidene)lysine.

It belongs to the G-protein coupled receptor 1 family. Opsin subfamily. Homodimer. Interacts with GNAQ. Post-translationally, contains one covalently linked retinal chromophore.

It is found in the cell projection. The protein resides in the rhabdomere membrane. In terms of biological role, photoreceptor required for image-forming vision at low light intensity. Can use both retinal and 3-dehydroretinal as visual pigment. Light-induced isomerization of 11-cis to all-trans retinal triggers a conformational change that activates signaling via G-proteins. Signaling via GNAQ probably mediates the activation of phospholipase C. The chain is Rhodopsin (RHO) from Lacunicambarus ludovicianus (Painted devil crayfish).